We begin with the raw amino-acid sequence, 435 residues long: Trigger factor (435 aa).

Residues Gly164–Gly249 enclose the PPIase FKBP-type domain.

The protein belongs to the FKBP-type PPIase family. Tig subfamily.

It localises to the cytoplasm. It carries out the reaction [protein]-peptidylproline (omega=180) = [protein]-peptidylproline (omega=0). Involved in protein export. Acts as a chaperone by maintaining the newly synthesized protein in an open conformation. Functions as a peptidyl-prolyl cis-trans isomerase. This is Trigger factor from Campylobacter fetus subsp. fetus (strain 82-40).